The primary structure comprises 254 residues: Thiazole synthase (254 aa).

Residue Lys-95 is the Schiff-base intermediate with DXP of the active site. Residues Gly-156, 182 to 183 (AG), and 204 to 205 (NT) each bind 1-deoxy-D-xylulose 5-phosphate.

The protein belongs to the ThiG family. As to quaternary structure, homotetramer. Forms heterodimers with either ThiH or ThiS.

The protein resides in the cytoplasm. It catalyses the reaction [ThiS sulfur-carrier protein]-C-terminal-Gly-aminoethanethioate + 2-iminoacetate + 1-deoxy-D-xylulose 5-phosphate = [ThiS sulfur-carrier protein]-C-terminal Gly-Gly + 2-[(2R,5Z)-2-carboxy-4-methylthiazol-5(2H)-ylidene]ethyl phosphate + 2 H2O + H(+). The protein operates within cofactor biosynthesis; thiamine diphosphate biosynthesis. Functionally, catalyzes the rearrangement of 1-deoxy-D-xylulose 5-phosphate (DXP) to produce the thiazole phosphate moiety of thiamine. Sulfur is provided by the thiocarboxylate moiety of the carrier protein ThiS. In vitro, sulfur can be provided by H(2)S. This chain is Thiazole synthase, found in Shewanella sediminis (strain HAW-EB3).